Here is a 93-residue protein sequence, read N- to C-terminus: Small integral membrane protein 36 (93 aa).

A helical transmembrane segment spans residues 14–34 (LIILVASYVILLLVFLVSCVL). Residues 70 to 93 (SHWARGPSLHLKDPAPLGKKSTVV) are disordered.

It is found in the membrane. The chain is Small integral membrane protein 36 from Mus musculus (Mouse).